Reading from the N-terminus, the 89-residue chain is Small ribosomal subunit protein uS17 (89 aa).

Belongs to the universal ribosomal protein uS17 family. As to quaternary structure, part of the 30S ribosomal subunit.

Its function is as follows. One of the primary rRNA binding proteins, it binds specifically to the 5'-end of 16S ribosomal RNA. This is Small ribosomal subunit protein uS17 from Polaromonas sp. (strain JS666 / ATCC BAA-500).